A 633-amino-acid polypeptide reads, in one-letter code: ATP-dependent zinc metalloprotease FtsH (633 aa).

Residues 1–19 lie on the Cytoplasmic side of the membrane; the sequence is MTPSNEPGKQDQIPQPGPT. Residues 20–40 traverse the membrane as a helical segment; sequence IPNQYSFLWLSAAIFLMFLWL. Over 41 to 133 the chain is Periplasmic; sequence QGNNQQQQQE…SRSGRPWWQE (93 aa). Residues 134–154 traverse the membrane as a helical segment; that stretch reads LILGFLPWILLLALMFWFWGA. Topologically, residues 155–633 are cytoplasmic; that stretch reads AQKRMTQGGG…LEEARSRETA (479 aa). An ATP-binding site is contributed by 226 to 233; that stretch reads GPPGTGKT. Zn(2+) is bound at residue His-447. Glu-448 is an active-site residue. Residues His-451 and Asp-523 each coordinate Zn(2+).

It in the central section; belongs to the AAA ATPase family. The protein in the C-terminal section; belongs to the peptidase M41 family. In terms of assembly, homohexamer. Zn(2+) is required as a cofactor.

The protein localises to the cell inner membrane. In terms of biological role, acts as a processive, ATP-dependent zinc metallopeptidase for both cytoplasmic and membrane proteins. Plays a role in the quality control of integral membrane proteins. The polypeptide is ATP-dependent zinc metalloprotease FtsH (Marinobacter nauticus (strain ATCC 700491 / DSM 11845 / VT8) (Marinobacter aquaeolei)).